The following is a 211-amino-acid chain: Small ribosomal subunit protein uS3 (211 aa).

The 69-residue stretch at 38 to 106 (LRSFVKKTFH…DVELHIVEVK (69 aa)) folds into the KH type-2 domain.

It belongs to the universal ribosomal protein uS3 family. In terms of assembly, part of the 30S ribosomal subunit. Forms a tight complex with proteins S10 and S14.

Binds the lower part of the 30S subunit head. Binds mRNA in the 70S ribosome, positioning it for translation. This chain is Small ribosomal subunit protein uS3, found in Anaplasma marginale (strain Florida).